A 166-amino-acid chain; its full sequence is ATP synthase subunit b 1 (166 aa).

A helical transmembrane segment spans residues 7–29 (FWTALAFVLFFVIFGRKLWVAIT).

The protein belongs to the ATPase B chain family. As to quaternary structure, F-type ATPases have 2 components, F(1) - the catalytic core - and F(0) - the membrane proton channel. F(1) has five subunits: alpha(3), beta(3), gamma(1), delta(1), epsilon(1). F(0) has three main subunits: a(1), b(2) and c(10-14). The alpha and beta chains form an alternating ring which encloses part of the gamma chain. F(1) is attached to F(0) by a central stalk formed by the gamma and epsilon chains, while a peripheral stalk is formed by the delta and b chains.

It localises to the cell inner membrane. In terms of biological role, f(1)F(0) ATP synthase produces ATP from ADP in the presence of a proton or sodium gradient. F-type ATPases consist of two structural domains, F(1) containing the extramembraneous catalytic core and F(0) containing the membrane proton channel, linked together by a central stalk and a peripheral stalk. During catalysis, ATP synthesis in the catalytic domain of F(1) is coupled via a rotary mechanism of the central stalk subunits to proton translocation. Its function is as follows. Component of the F(0) channel, it forms part of the peripheral stalk, linking F(1) to F(0). This Gluconobacter oxydans (strain 621H) (Gluconobacter suboxydans) protein is ATP synthase subunit b 1.